The following is a 159-amino-acid chain: Regulatory protein RecX (159 aa).

The protein belongs to the RecX family.

The protein resides in the cytoplasm. Functionally, modulates RecA activity. The sequence is that of Regulatory protein RecX from Acinetobacter baylyi (strain ATCC 33305 / BD413 / ADP1).